Reading from the N-terminus, the 296-residue chain is Zinc finger CCCH-type antiviral protein 1-like (296 aa).

Ala-2 carries the N-acetylalanine modification. C3H1-type zinc fingers lie at residues 111–136 and 198–219; these read LCRR…HDIH and VCKS…HQLI.

The polypeptide is Zinc finger CCCH-type antiviral protein 1-like (Zc3hav1l) (Mus musculus (Mouse)).